Here is a 375-residue protein sequence, read N- to C-terminus: Succinyl-diaminopimelate desuccinylase (375 aa).

A Zn(2+)-binding site is contributed by His-66. The active site involves Asp-68. Asp-99 contributes to the Zn(2+) binding site. Glu-133 acts as the Proton acceptor in catalysis. 3 residues coordinate Zn(2+): Glu-134, Glu-162, and His-348.

It belongs to the peptidase M20A family. DapE subfamily. As to quaternary structure, homodimer. Requires Zn(2+) as cofactor. It depends on Co(2+) as a cofactor.

The catalysed reaction is N-succinyl-(2S,6S)-2,6-diaminopimelate + H2O = (2S,6S)-2,6-diaminopimelate + succinate. It participates in amino-acid biosynthesis; L-lysine biosynthesis via DAP pathway; LL-2,6-diaminopimelate from (S)-tetrahydrodipicolinate (succinylase route): step 3/3. In terms of biological role, catalyzes the hydrolysis of N-succinyl-L,L-diaminopimelic acid (SDAP), forming succinate and LL-2,6-diaminopimelate (DAP), an intermediate involved in the bacterial biosynthesis of lysine and meso-diaminopimelic acid, an essential component of bacterial cell walls. This Yersinia enterocolitica serotype O:8 / biotype 1B (strain NCTC 13174 / 8081) protein is Succinyl-diaminopimelate desuccinylase.